Consider the following 517-residue polypeptide: NEDD8-activating enzyme E1 regulatory subunit (517 aa).

The protein belongs to the ubiquitin-activating E1 family. ULA1 subfamily. In terms of assembly, heterodimer of uba3 and ula1. The complex binds NEDD8/ubl1 and ubc12.

Its subcellular location is the cytoplasm. It is found in the nucleus. It functions in the pathway protein modification; protein neddylation. Regulatory subunit of the dimeric uba3-ula1 E1 enzyme. E1 activates NEDD8/ubl1 by first adenylating its C-terminal glycine residue with ATP, thereafter linking this residue to the side chain of the catalytic cysteine, yielding a NEDD8-UBA3 thioester and free AMP. E1 finally transfers NEDD8 to the catalytic cysteine of ubc12. The chain is NEDD8-activating enzyme E1 regulatory subunit (uba5) from Schizosaccharomyces pombe (strain 972 / ATCC 24843) (Fission yeast).